The primary structure comprises 350 residues: Anthranilate phosphoribosyltransferase (350 aa).

Residues Gly82, Gly85–Asp86, Ser90, Asn92–Thr95, Lys110–Gly118, and Gly122 each bind 5-phospho-alpha-D-ribose 1-diphosphate. Gly82 serves as a coordination point for anthranilate. Ser94 contacts Mg(2+). Asn113 contacts anthranilate. An anthranilate-binding site is contributed by Arg168. 2 residues coordinate Mg(2+): Asp232 and Glu233.

The protein belongs to the anthranilate phosphoribosyltransferase family. As to quaternary structure, homodimer. Mg(2+) is required as a cofactor.

The catalysed reaction is N-(5-phospho-beta-D-ribosyl)anthranilate + diphosphate = 5-phospho-alpha-D-ribose 1-diphosphate + anthranilate. It functions in the pathway amino-acid biosynthesis; L-tryptophan biosynthesis; L-tryptophan from chorismate: step 2/5. Its function is as follows. Catalyzes the transfer of the phosphoribosyl group of 5-phosphorylribose-1-pyrophosphate (PRPP) to anthranilate to yield N-(5'-phosphoribosyl)-anthranilate (PRA). This is Anthranilate phosphoribosyltransferase from Methanothermobacter marburgensis (strain ATCC BAA-927 / DSM 2133 / JCM 14651 / NBRC 100331 / OCM 82 / Marburg) (Methanobacterium thermoautotrophicum).